A 344-amino-acid polypeptide reads, in one-letter code: 4-hydroxy-3-methylbut-2-en-1-yl diphosphate synthase (flavodoxin) (344 aa).

Residues C253, C256, C288, and E295 each contribute to the [4Fe-4S] cluster site.

It belongs to the IspG family. It depends on [4Fe-4S] cluster as a cofactor.

It catalyses the reaction (2E)-4-hydroxy-3-methylbut-2-enyl diphosphate + oxidized [flavodoxin] + H2O + 2 H(+) = 2-C-methyl-D-erythritol 2,4-cyclic diphosphate + reduced [flavodoxin]. It participates in isoprenoid biosynthesis; isopentenyl diphosphate biosynthesis via DXP pathway; isopentenyl diphosphate from 1-deoxy-D-xylulose 5-phosphate: step 5/6. Its function is as follows. Converts 2C-methyl-D-erythritol 2,4-cyclodiphosphate (ME-2,4cPP) into 1-hydroxy-2-methyl-2-(E)-butenyl 4-diphosphate. The protein is 4-hydroxy-3-methylbut-2-en-1-yl diphosphate synthase (flavodoxin) of Thermotoga maritima (strain ATCC 43589 / DSM 3109 / JCM 10099 / NBRC 100826 / MSB8).